A 558-amino-acid polypeptide reads, in one-letter code: Glypican-1 (558 aa).

Residues 1-23 (MELRARGWWLLCAAAALVACTRG) form the signal peptide. 7 cysteine pairs are disulfide-bonded: Cys-32–Cys-68, Cys-62–Cys-256, Cys-69–Cys-259, Cys-191–Cys-343, Cys-246–Cys-279, Cys-268–Cys-415, and Cys-272–Cys-401. Residues Asn-79 and Asn-116 are each glycosylated (N-linked (GlcNAc...) asparagine). The segment at 478–531 (FQDASDDGSGSGSGGGCPDDACGRRVSKKSSSSRTPLIHALPGLSEQEGQKTSA) is disordered. Residues Ser-486, Ser-488, and Ser-490 are each glycosylated (O-linked (Xyl...) (heparan sulfate) serine). Ser-530 is lipidated: GPI-anchor amidated serine. Residues 531–558 (AATRPEPHYFFLLFLFTLVLAAARPRWR) constitute a propeptide, removed in mature form.

The protein belongs to the glypican family. S-nitrosylated in a Cu(2+)-dependent manner. Nitric acid (NO) is released from the nitrosylated cysteines by ascorbate or by some other reducing agent, in a Cu(2+) or Zn(2+) dependent manner. This free nitric oxide is then capable of cleaving the heparan sulfate side chains. Post-translationally, N- and O-glycosylated. N-glycosylation is mainly of the complex type containing sialic acid. O-glycosylated with heparan sulfate. The heparan sulfate chains can be cleaved either by the action of heparanase or, degraded by a deaminative process that uses nitric oxide (NO) released from the S-nitrosylated cysteines. This process is triggered by ascorbate, or by some other reducing agent, in a Cu(2+)- or Zn(2+) dependent manner. Cu(2+) ions are provided by ceruloproteins such as APP, PRNP or CP which associate with GCP1 in intracellular compartments or lipid rafts. In terms of processing, this cell-associated glypican is further processed to give rise to a medium-released species. In terms of tissue distribution, nervous system.

It localises to the cell membrane. Its subcellular location is the endosome. It is found in the secreted. The protein localises to the extracellular space. In terms of biological role, cell surface proteoglycan that bears heparan sulfate. May act as a catalyst in increasing the rate of conversion of prion protein PRPN(C) to PRNP(Sc) via associating (via the heparan sulfate side chains) with both forms of PRPN, targeting them to lipid rafts and facilitating their interaction. Required for proper skeletal muscle differentiation by sequestering FGF2 in lipid rafts preventing its binding to receptors (FGFRs) and inhibiting the FGF-mediated signaling. Binds Cu(2+) or Zn(2+) ions. Binds, via the heparan sulfate side chains, alpha-4 (V) collagen and participates in Schwann cell myelination. The chain is Glypican-1 (Gpc1) from Rattus norvegicus (Rat).